The chain runs to 390 residues: Na(+)/H(+) antiporter NhaA (390 aa).

The next 12 helical transmembrane spans lie at 14–34 (AAGG…ANLN), 61–81 (MLLW…GLEV), 97–117 (SLPV…YLAF), 126–146 (AGWA…LALL), 156–176 (VFLM…IALF), 181–201 (LSMV…VLNL), 221–241 (VLKS…FVPL), 256–276 (ALHP…NAGV), 280–300 (GVTL…GLFI), 305–325 (GISL…PPGV), 330–350 (ILAV…IASL), and 362–382 (WAKL…YALL).

The protein belongs to the NhaA Na(+)/H(+) (TC 2.A.33) antiporter family.

It localises to the cell inner membrane. It catalyses the reaction Na(+)(in) + 2 H(+)(out) = Na(+)(out) + 2 H(+)(in). Functionally, na(+)/H(+) antiporter that extrudes sodium in exchange for external protons. The polypeptide is Na(+)/H(+) antiporter NhaA (Cronobacter sakazakii (strain ATCC BAA-894) (Enterobacter sakazakii)).